Consider the following 195-residue polypeptide: EEVADGQAHGEXVYREEHHEGEKNXHLVXKDEETKLFVGALSWETTEKYGEIEGINVKPNLNRXRXFAXINIKTPNALDDAIKYGTITXAAVVLDKXKXYEVDIKKATPKDAMMMPPMRGGRGGLGLGGAWVAPGSFGYGGGYGGYGGGYGDDAYGGAGYDYYGSGYGGGYGSGYEGYGYNGGYGGYSGPARGGK.

Residues 1–23 (EEVADGQAHGEXVYREEHHEGEK) form a disordered region. Residues 12-23 (XVYREEHHEGEK) are compositionally biased toward basic and acidic residues. Positions 32–48 (EETKLFVGALSWETTEK) constitute an RRM domain. Asymmetric dimethylarginine occurs at positions 119 and 122. Ser-173 bears the Phosphoserine; by CK2 mark.

Extensively phosphorylated on tyrosine residues.

The protein resides in the cytoplasm. The protein localises to the nucleus. In terms of biological role, may regulate mRNA translation and stability. It binds to poly(A) and poly(U) regions of RNA. This binding is inhibited when the protein is phosphorylated. This Artemia salina (Brine shrimp) protein is Heterogeneous nuclear ribonucleoprotein A/B.